Consider the following 131-residue polypeptide: uncharacterized protein (131 aa).

The segment at 99–131 is disordered; the sequence is NAIQEEEIDMEQQEEKEEKPREKGKKKSVEEEF. Acidic residues predominate over residues 102–113; that stretch reads QEEEIDMEQQEE. The segment covering 114–131 has biased composition (basic and acidic residues); the sequence is KEEKPREKGKKKSVEEEF.

This is an uncharacterized protein from Sulfolobus islandicus rod-shaped virus 1 (SIRV-1).